The following is a 436-amino-acid chain: UPF0597 protein YhaM (436 aa).

It belongs to the UPF0597 family.

The polypeptide is UPF0597 protein YhaM (Shigella boydii serotype 18 (strain CDC 3083-94 / BS512)).